The chain runs to 464 residues: MGAKTYEGGDHHEDATNVLSTKSNAVGGKPRGANMLEDGDGEFGSDDDDDGGDGQDSSLAMVNPDDAAKPKKKKRSKKKKNNKKKSGAGAQRQTSPPRVPLSQLFPDGKYPIGQMVEVQDENLRRTTDEEFRYLSRGTITDDEALNDYRKAAEVHRQVRRWIHETIQPGSSLTELAVGIEDGVRALLEHQGLEPGDSLKGGMGFPTGLALNNCAAHYTPNPGQKDIILKTDDVLKIDFGVHVNGWIVDSAFTVTFDPVYDNLVAAVKDATNTGLKCAGVDARVGEIGGFIQEAMESYEVEINGKVYPVKSIRSITGHDILRYRVHGGKQVPFVKSNDQTKMEEGEVFAIETFGSTGKGYLRDGPGVYGYSKEPHAGNVHLPLASARALLKTINQNFGTIPFCRRYLDRLGIEKYLLGMNSLISHGIVQMYPPLVDIAGSYTAQFEHTILINSSGNEIISRGDDY.

The interval 1–106 (MGAKTYEGGD…PRVPLSQLFP (106 aa)) is disordered. Acidic residues predominate over residues 37–53 (EDGDGEFGSDDDDDGGD). Basic residues predominate over residues 70–86 (PKKKKRSKKKKNNKKKS). His216 serves as a coordination point for substrate. Asp237, Asp248, and His317 together coordinate a divalent metal cation. His325 is a binding site for substrate. 2 residues coordinate a divalent metal cation: Glu350 and Glu445.

It belongs to the peptidase M24A family. Methionine aminopeptidase eukaryotic type 2 subfamily. Requires Co(2+) as cofactor. The cofactor is Zn(2+). It depends on Mn(2+) as a cofactor. Fe(2+) is required as a cofactor.

It is found in the cytoplasm. It catalyses the reaction Release of N-terminal amino acids, preferentially methionine, from peptides and arylamides.. In terms of biological role, cotranslationally removes the N-terminal methionine from nascent proteins. The N-terminal methionine is often cleaved when the second residue in the primary sequence is small and uncharged (Met-Ala-, Cys, Gly, Pro, Ser, Thr, or Val). The chain is Methionine aminopeptidase 2-2 from Talaromyces stipitatus (strain ATCC 10500 / CBS 375.48 / QM 6759 / NRRL 1006) (Penicillium stipitatum).